A 199-amino-acid chain; its full sequence is MLVKTHITKIGVTLFAVALFYGFIYMLSNSLFATRPATAVAVGADGKALLPSVDEAAMPAKAPAAAAPAAETAEAAAPAEPAAPPPPAYVEVDPATITGDAKAGEEKFNKTCKACHKIDGKNAVGPHLNGVIGRATATVEGFKYSTAMKNHVGNWTPERLDIYLVSPKAEVPGTKMSFVGLPEAADRANVIAYLNTLPR.

A helical membrane pass occupies residues 7 to 27 (ITKIGVTLFAVALFYGFIYML). The span at 69-80 (AAETAEAAAPAE) shows a compositional bias: low complexity. The disordered stretch occupies residues 69–93 (AAETAEAAAPAEPAAPPPPAYVEVD). Heme c is bound by residues Cys-112, Cys-115, His-116, and Met-148.

Binds 1 heme c group covalently per subunit.

It is found in the cell membrane. Electron transfer pathways that operates during photosynthesis. The sequence is that of Cytochrome c-type cyt cy (cycY) from Rhodobacter capsulatus (strain ATCC BAA-309 / NBRC 16581 / SB1003).